The sequence spans 555 residues: MSEAEARPTNFIRQIIDEDLASGKHTTVHTRFPPEPNGYLHIGHAKSICLNFGIAQDYQGQCNLRFDDTNPVKEDIEYVDSIKNDVEWLGFHWSGDIRYSSDYFDQLHAYAVELINKGLAYVDELTPEQIREYRGTLTAPGKNSPFRDRSVEENLALFEKMRTGGFEEGKACLRAKIDMASPFIVMRDPVLYRIKFAEHHQTGNKWCIYPMYDFTHCISDALEGITHSLCTLEFQDNRRLYDWVLDNITIPVHPRQYEFSRLNLEYTVMSKRKLNLLVTDKHVEGWDDPRMPTISGLRRRGYTAASIREFCKRIGVTKQDNTIEMASLESCIREDLNENAPRAMAVIDPVKLVIENYPQGESEMVTMPNHPNKPEMGSREVPFSGEIWIDRADFREEANKQYKRLVMGKEVRLRNAYVIKAERVEKDAEGNITTIFCTYDADTLSKDPADGRKVKGVIHWVSAAHALPIEIRLYDRLFSVPNPGTAEDFLSVINPESLVIKQGYGEPSLKAAVAGKAFQFEREGYFCLDSCYATADKLVFNRTVGLRDTWAKAGE.

The 'HIGH' region signature appears at 34-44; that stretch reads PEPNGYLHIGH. ATP contacts are provided by residues 35–37 and 41–47; these read EPN and HIGHAKS. Positions 67 and 212 each coordinate L-glutamine. ATP is bound by residues threonine 231, 261 to 262, and 269 to 271; these read RL and MSK. A 'KMSKS' region motif is present at residues 268–272; that stretch reads VMSKR. An interaction with tRNA region spans residues 317–324; it reads TKQDNTIE.

This sequence belongs to the class-I aminoacyl-tRNA synthetase family. As to quaternary structure, monomer.

It localises to the cytoplasm. The enzyme catalyses tRNA(Gln) + L-glutamine + ATP = L-glutaminyl-tRNA(Gln) + AMP + diphosphate. The sequence is that of Glutamine--tRNA ligase from Salmonella choleraesuis (strain SC-B67).